The chain runs to 280 residues: Cobalt import ATP-binding protein CbiO (280 aa).

In terms of domain architecture, ABC transporter spans 2-236 (IEVRDLRFHY…GDWLRQQGLG (235 aa)). An ATP-binding site is contributed by 36–43 (GANGCGKT).

It belongs to the ABC transporter superfamily. Cobalt importer (TC 3.A.1.18.1) family. In terms of assembly, forms an energy-coupling factor (ECF) transporter complex composed of an ATP-binding protein (A component, CbiO), a transmembrane protein (T component, CbiQ) and 2 possible substrate-capture proteins (S components, CbiM and CbiN) of unknown stoichimetry.

Its subcellular location is the cell inner membrane. It participates in cofactor biosynthesis; adenosylcobalamin biosynthesis. In terms of biological role, part of the energy-coupling factor (ECF) transporter complex CbiMNOQ involved in cobalt import. Presumably responsible for energy coupling to the transport system. This chain is Cobalt import ATP-binding protein CbiO, found in Syntrophus aciditrophicus (strain SB).